The sequence spans 456 residues: MGLEWSSPGERQPLLFPGGPRSPRVFGRRWLVLLLFSVLAFLQGLVWNSWGPIQISARTAYKFSGLDIALLVLWGPIGFLPCFLFMWLMDNRGLRITVLLTALLMVLGAGLRCVPVEDLAIRRILIHGGQLLNGFAGPTVMNAAPFLSTTWFAPDERATATAIASMLNYLGGACAFLVGPLVVPAPNSTSGLLLYSGSTDAIKDRIEAVMYAEFGIIFVVFAAILAYFPARPPVPPSVAAASRRLSYRTSIFRLLSNLRFLLIVLAYAIPLGFYSGWIGVLDLILTPVHVTQVDAGWVGFWSIVGGCVVGIAVGRFADSIRGVLKPILLLLFSGATLSATWFTLTFLSNVTHLPLTTATLYTSCILIGVFLNGTVPIFFELFVETVYPIPEGIACGVVTFLSNIFMGVLLVFLTMYQMELSWLNWCLTGSCFLSLFFIACFRESYDRLYLDVFVSV.

The Cytoplasmic portion of the chain corresponds to 1 to 29 (MGLEWSSPGERQPLLFPGGPRSPRVFGRR). A Di-leucine motif; mediates lysosomal localization motif is present at residues 14–15 (LL). The chain crosses the membrane as a helical span at residues 30–50 (WLVLLLFSVLAFLQGLVWNSW). Over 51 to 67 (GPIQISARTAYKFSGLD) the chain is Lumenal. Residues 68 to 88 (IALLVLWGPIGFLPCFLFMWL) traverse the membrane as a helical segment. Topologically, residues 89–95 (MDNRGLR) are cytoplasmic. A helical transmembrane segment spans residues 96–116 (ITVLLTALLMVLGAGLRCVPV). Residues 117 to 123 (EDLAIRR) lie on the Lumenal side of the membrane. Residues 124 to 144 (ILIHGGQLLNGFAGPTVMNAA) traverse the membrane as a helical segment. The Cytoplasmic portion of the chain corresponds to 145–162 (PFLSTTWFAPDERATATA). A helical membrane pass occupies residues 163-183 (IASMLNYLGGACAFLVGPLVV). Topologically, residues 184–207 (PAPNSTSGLLLYSGSTDAIKDRIE) are lumenal. An N-linked (GlcNAc...) asparagine glycan is attached at Asn187. Residues 208–228 (AVMYAEFGIIFVVFAAILAYF) form a helical membrane-spanning segment. Over 229–259 (PARPPVPPSVAAASRRLSYRTSIFRLLSNLR) the chain is Cytoplasmic. A helical membrane pass occupies residues 260-280 (FLLIVLAYAIPLGFYSGWIGV). The Lumenal portion of the chain corresponds to 281–292 (LDLILTPVHVTQ). A helical membrane pass occupies residues 293–313 (VDAGWVGFWSIVGGCVVGIAV). Residues 314–326 (GRFADSIRGVLKP) lie on the Cytoplasmic side of the membrane. Residues 327–347 (ILLLLFSGATLSATWFTLTFL) traverse the membrane as a helical segment. The Lumenal segment spans residues 348–362 (SNVTHLPLTTATLYT). The N-linked (GlcNAc...) asparagine glycan is linked to Asn349. The helical transmembrane segment at 363–383 (SCILIGVFLNGTVPIFFELFV) threads the bilayer. The Cytoplasmic portion of the chain corresponds to 384 to 392 (ETVYPIPEG). The helical transmembrane segment at 393–413 (IACGVVTFLSNIFMGVLLVFL) threads the bilayer. At 414–420 (TMYQMEL) the chain is on the lumenal side. The chain crosses the membrane as a helical span at residues 421–441 (SWLNWCLTGSCFLSLFFIACF). The Cytoplasmic portion of the chain corresponds to 442–456 (RESYDRLYLDVFVSV).

This sequence belongs to the major facilitator superfamily.

The protein localises to the lysosome membrane. The catalysed reaction is pyridoxine(out) + n H(+)(out) = pyridoxine(in) + n H(+)(in). Mediates H(+)-dependent pyridoxine transport. This Xenopus laevis (African clawed frog) protein is Solute carrier family 49 member 4 homolog (slc49a4).